We begin with the raw amino-acid sequence, 75 residues long: UPF0291 protein lin1342 (75 aa).

The tract at residues 55-75 (IDPKGNDVTPHKIKQMRKNKK) is disordered. Over residues 65 to 75 (HKIKQMRKNKK) the composition is skewed to basic residues.

This sequence belongs to the UPF0291 family.

The protein localises to the cytoplasm. The chain is UPF0291 protein lin1342 from Listeria innocua serovar 6a (strain ATCC BAA-680 / CLIP 11262).